A 782-amino-acid polypeptide reads, in one-letter code: LPS-assembly protein LptD (782 aa).

An N-terminal signal peptide occupies residues 1–23; sequence MNKKHTLISLAILTALYSQQSLA.

It belongs to the LptD family. In terms of assembly, component of the lipopolysaccharide transport and assembly complex. Interacts with LptE and LptA.

It is found in the cell outer membrane. Functionally, together with LptE, is involved in the assembly of lipopolysaccharide (LPS) at the surface of the outer membrane. In Haemophilus influenzae (strain 86-028NP), this protein is LPS-assembly protein LptD.